Consider the following 518-residue polypeptide: 4-trimethylaminobutyraldehyde dehydrogenase B (518 aa).

NAD(+) contacts are provided by residues Lys-204 and Gly-256–Thr-260. The active-site Proton acceptor is the Glu-278. Cys-312 acts as the Nucleophile in catalysis. An NAD(+)-binding site is contributed by Glu-415.

The protein belongs to the aldehyde dehydrogenase family. In terms of assembly, homotetramer.

The protein resides in the cytoplasm. It is found in the cytosol. The catalysed reaction is 4-(trimethylamino)butanal + NAD(+) + H2O = 4-(trimethylamino)butanoate + NADH + 2 H(+). It catalyses the reaction an aldehyde + NAD(+) + H2O = a carboxylate + NADH + 2 H(+). Its pathway is amine and polyamine biosynthesis; carnitine biosynthesis. In terms of biological role, converts gamma-trimethylaminobutyraldehyde into gamma-butyrobetaine with high efficiency (in vitro). Can catalyze the irreversible oxidation of a broad range of aldehydes to the corresponding acids in an NAD-dependent reaction, but with low efficiency. The polypeptide is 4-trimethylaminobutyraldehyde dehydrogenase B (aldh9a1b) (Danio rerio (Zebrafish)).